The chain runs to 606 residues: Thrombospondin-related anonymous protein (606 aa).

A signal peptide spans 1 to 24; the sequence is MKLLGNSKYFFVVLLLCISVFLNG. A VWFA domain is found at 43–228; it reads DLHILLDGSG…TMIKPFLSKV (186 aa). The region spanning 235-281 is the TSP type-1 domain; the sequence is VALCGKWEEWSECSTTCDNGTKIRKRKVLHPNCAGEMTAPCKVRDCP. Positions 301-541 are disordered; the sequence is PVEPIEPAEP…SKKQSKSNNG (241 aa). 3 stretches are compositionally biased toward low complexity: residues 409–425, 440–450, and 459–479; these read ENPFIIPDEPIEPIIAP, ELPNNLPESPS, and PNDNGDNSNNTINSNKNIPNK. 2 stretches are compositionally biased toward basic and acidic residues: residues 487–504 and 516–532; these read NPYKGQEERIPKPHRSND and DKLEPEIPSKDYEENKS. A helical membrane pass occupies residues 544–564; the sequence is IAGGIIGGLAIIGCIGVGYNF.

Interacts (via integrin-like A-domain) with Anopheles gambiae saglin/SG1F; the interaction probably promotes sporozoite invasion of salivary gland. Interacts (via integrin-like A-domain) with human AHSG; the interaction promotes sporozoite invasion of hepatocytes and formation of exoerythrocytic forms of parasites in human hepatoma HepG2 cells.

The protein localises to the cell membrane. It is found in the cytoplasm. Promotes parasite ability to invade host hepatocytes. Promotes parasite ability to invade mosquito salivary glands. Required for sporozoite gliding motility. This chain is Thrombospondin-related anonymous protein, found in Plasmodium berghei (strain Anka).